Reading from the N-terminus, the 339-residue chain is Large ribosomal subunit protein uL29 (339 aa).

Residues 1–96 (MNDLTKKSVE…FAKQRKAKIE (96 aa)) are large ribosomal subunit protein uL29. Positions 97–339 (QMMAEQQAAE…KTTKKGTGKK (243 aa)) are unknown. Disordered stretches follow at residues 129–254 (VVST…VPTK) and 311–339 (KENR…TGKK). The segment covering 145–156 (APVAAKKPAAAK) has biased composition (low complexity). The segment covering 157 to 170 (DFPKQKDVVEEKTA) has biased composition (basic and acidic residues). Positions 171 to 182 (TGKPAAPSAKKA) are enriched in low complexity. Residues 185–210 (AKKDVAQETKTDKDAALKALIKEKAA) show a composition bias toward basic and acidic residues. A compositionally biased stretch (low complexity) spans 217–238 (KSKTSTPSGKTTVTVKSVTSAK). The segment covering 239-248 (ADIEVPKETS) has biased composition (basic and acidic residues).

The protein belongs to the universal ribosomal protein uL29 family. Forms homomultimers. Part of the ribosome; radioactive IRS binds to purified ribosomes.

In terms of biological role, specifically binds a DNA inverted repeat sequence (IRS) found downstream of rpsB in one of the ribosomal subunit operons (for genes rpsB, tsf, and unknown gene x). Might be involved in regulation of transcription of the rpsB operon; the IRS may be a control element to attenuate transcription. This chain is Large ribosomal subunit protein uL29, found in Spiroplasma citri.